Here is a 292-residue protein sequence, read N- to C-terminus: Calcium-binding protein CBP (292 aa).

The disordered stretch occupies residues 1–80; the sequence is MAGYPPNPGS…YGSGGGYGAP (80 aa). The span at 12-21 shows a compositional bias: gly residues; that stretch reads YPYGGAGGYG. Pro residues predominate over residues 22 to 40; sequence APPPPYGSSPAPSAPPYGA. EF-hand domains are found at residues 121-156 and 187-222; these read GTDP…YSQS and YSLQ…LGYS. Ca(2+) contacts are provided by Asp-134, Asp-136, Ser-138, Met-140, Glu-145, Asp-200, Asp-202, Ser-204, Lys-206, and Glu-211.

Its function is as follows. Potential calcium sensor. This Oryza sativa subsp. japonica (Rice) protein is Calcium-binding protein CBP.